The following is a 510-amino-acid chain: ATP synthase subunit alpha (510 aa).

169 to 176 lines the ATP pocket; it reads GDRQTGKT.

This sequence belongs to the ATPase alpha/beta chains family. F-type ATPases have 2 components, CF(1) - the catalytic core - and CF(0) - the membrane proton channel. CF(1) has five subunits: alpha(3), beta(3), gamma(1), delta(1), epsilon(1). CF(0) has three main subunits: a(1), b(2) and c(9-12). The alpha and beta chains form an alternating ring which encloses part of the gamma chain. CF(1) is attached to CF(0) by a central stalk formed by the gamma and epsilon chains, while a peripheral stalk is formed by the delta and b chains.

Its subcellular location is the cell inner membrane. The catalysed reaction is ATP + H2O + 4 H(+)(in) = ADP + phosphate + 5 H(+)(out). Its function is as follows. Produces ATP from ADP in the presence of a proton gradient across the membrane. The alpha chain is a regulatory subunit. This Azorhizobium caulinodans (strain ATCC 43989 / DSM 5975 / JCM 20966 / LMG 6465 / NBRC 14845 / NCIMB 13405 / ORS 571) protein is ATP synthase subunit alpha.